A 464-amino-acid polypeptide reads, in one-letter code: E3 ubiquitin-protein ligase MYLIP-B (464 aa).

An FERM domain is found at 1–279 (MLCHITRPDS…EIHAFYRCDT (279 aa)). An RING-type zinc finger spans residues 381–416 (CALCCEQEISAAFCPCGHMFCCYNCASQLQCCPVCR).

In terms of assembly, interacts with anxa5.

The protein localises to the cytoplasm. It is found in the cytosol. The catalysed reaction is S-ubiquitinyl-[E2 ubiquitin-conjugating enzyme]-L-cysteine + [acceptor protein]-L-lysine = [E2 ubiquitin-conjugating enzyme]-L-cysteine + N(6)-ubiquitinyl-[acceptor protein]-L-lysine.. It participates in protein modification; protein ubiquitination. Its function is as follows. E3 ubiquitin-protein ligase that mediates ubiquitination and subsequent proteasomal degradation of myosin regulatory light chain (MRLC). Regulates cell movements during gastrulation by acting downstream of fz7 to antagonize the frizzled-signaling pathway. In Danio rerio (Zebrafish), this protein is E3 ubiquitin-protein ligase MYLIP-B.